A 1349-amino-acid polypeptide reads, in one-letter code: Adhesion G protein-coupled receptor F5 (1349 aa).

Residues 1 to 24 (MKSSRTVTLYFVLIVICSSEATWS) form the signal peptide. At 25-1016 (RPAEPIVHPL…PGSLLKILLD (992 aa)) the chain is on the extracellular side. N-linked (GlcNAc...) asparagine glycosylation is found at Asn73, Asn94, Asn185, Asn254, Asn270, Asn286, Asn299, Asn326, Asn337, Asn349, Asn396, Asn470, Asn503, Asn538, Asn649, and Asn666. The SEA domain occupies 163-271 (PETYITLKIK…NSFQGTPSNE (109 aa)). 3 consecutive Ig-like domains span residues 268-366 (PSNE…LDVT), 367-464 (PIRI…IAVT), and 469-559 (ANLT…KDVT). Residues Cys291 and Cys348 are joined by a disulfide bond. Cys389 and Cys447 are joined by a disulfide. Residues Cys490 and Cys543 are joined by a disulfide bond. A Phosphoserine modification is found at Ser819. N-linked (GlcNAc...) asparagine glycosylation is found at Asn820, Asn958, and Asn963. The region spanning 842–1006 (TPPFLFHPNV…SILMSPDSPD (165 aa)) is the GAIN-B domain. 2 cysteine pairs are disulfide-bonded: Cys954-Cys988 and Cys973-Cys990. Residues 954–1006 (CVFWNFSLANNTGGWDSSGCTVEDDGRDNRDRVFCKCNHLTSFSILMSPDSPD) form a GPS region. The tract at residues 994-1009 (TSFSILMSPDSPDPGS) is tethered agonist. The helical transmembrane segment at 1017–1036 (IISYIGLGFSIVSLAACLVV) threads the bilayer. The Cytoplasmic portion of the chain corresponds to 1037-1055 (EAMVWKSVTKNRTSYMRHI). Residues 1056–1078 (CIVNIALCLLIADIWFIVAGAIH) traverse the membrane as a helical segment. The Extracellular portion of the chain corresponds to 1079–1097 (DGHYPLNETACVAATFFIH). Asn1085 carries an N-linked (GlcNAc...) asparagine glycan. The helical transmembrane segment at 1098–1120 (FFYLSVFFWMLTLGLMLFYRLIF) threads the bilayer. At 1121 to 1131 (ILHDASKSTQK) the chain is on the cytoplasmic side. Residues 1132–1154 (AIAFSLGYGCPLIISSITVGVTQ) traverse the membrane as a helical segment. Residues 1155–1173 (PQEVYMRKNACWLNWEDTR) are Extracellular-facing. Residues 1174–1196 (ALLAFAIPALIIVVVNVSITVVV) traverse the membrane as a helical segment. At 1197-1216 (ITKILRPSVGDKPGKQEKSS) the chain is on the cytoplasmic side. A helical transmembrane segment spans residues 1217–1239 (LFQISKSIGVLTPLLGLTWGFGL). At 1240 to 1248 (ATVIQGSNA) the chain is on the extracellular side. The chain crosses the membrane as a helical span at residues 1249-1271 (VFHIIFTLLNAFQGLFILLFGCL). Residues 1272–1349 (WDQKVQEALL…NSSSAYSLLN (78 aa)) are Cytoplasmic-facing. Phosphothreonine is present on Thr1303. Residue Ser1310 is modified to Phosphoserine. A compositionally biased stretch (low complexity) spans 1329 to 1343 (STPETTSSSVENSSS). A disordered region spans residues 1329 to 1349 (STPETTSSSVENSSSAYSLLN).

This sequence belongs to the G-protein coupled receptor 2 family. Adhesion G-protein coupled receptor (ADGR) subfamily. Homodimer; disulfide-linked. Heterodimer of 2 chains generated by proteolytic processing; the large extracellular N-terminal fragment and the membrane-bound C-terminal fragment predominantly remain associated and non-covalently linked. Fragment generates by the processing enzyme furin remains attached to the extracellular N-terminal fragment. Interacts (via N-terminal extracellular domain) with SFTPD. In terms of processing, highly glycosylated. Post-translationally, proteolytically cleaved at multiple sites: one in the GPS region of the GAIN-B domain (S1 site) and the other in the SEA domain (S2 site). The proteolytic cleavage at S1 site generates an extracellular subunit and a seven-transmembrane subunit. The proteolytic cleavage at S2 site generates a fragment that undergoes proteolytic cleavage by the processing enzyme furin. As to expression, highly expressed in the lung and to a much lesser extent in the kidney and heart. Dense localization in alveolar walls of the lung and in the intercalated cells of the collecting duct of the kidney.

It localises to the cell membrane. Its activity is regulated as follows. As an adhesion G protein-coupled receptor (aGPCR) exhibits a large N-terminal extracellular domain containing highly conserved GPCR autoproteolysis-inducing (GAIN) domain. During synthesis, intracellular autoproteolytic processing of nascent chain within the GAIN domain generates a mature protein, consisting of an N-terminal fragment that is non-covalently linked to the C-terminal fragment. The mature protein is routed to the plasma membrane where the N- and C-terminal fragments remain associated, forming the holoreceptor. Dissociation of the aGPCR fragments stimulates G protein signaling through the action of the tethered-peptide agonist stalk that is occluded within the GAIN domain in the holoreceptor form. This dissociation might be induced by ligand binding, such as that of sFNDC4. In terms of biological role, receptor that plays a critical role in lung surfactant homeostasis. May play a role in controlling adipocyte function. Functionally, adhesion G protein-coupled receptor. In alveolar type II (ATII or AT2) cells, required for normal lung surfactant homeostasis. Modulation of both surfactant secretion and uptake by ATII cells is mediated by the downstream activation of GNAQ/GNA11 proteins and may be a consequence of increased cortical F-actin assembly induced by ADGRF5 activation. In the kidney, may play a role in the regulation of acid excretion into the primary urine, possibly by regulating the surface expression of V-ATPase proton pump. As a receptor for soluble FNDC4 (sFNDC4), required for proper systemic glucose tolerance, specifically sensitizing white adipose tissue to insulin. Also plays a role in sFNDC4-induced decrease of local inflammation in white adipose tissue. This chain is Adhesion G protein-coupled receptor F5 (Adgrf5), found in Rattus norvegicus (Rat).